A 1046-amino-acid chain; its full sequence is Protein jim lovell (1046 aa).

Residues 54–109 are disordered; the sequence is TSDHAPMHSTPPTTPPTPPPLPLNMSQSASAVTEAATPENSLPATPPSEGALAVPS. Positions 65–75 are enriched in pro residues; the sequence is PTTPPTPPPLP. The BTB domain maps to 140–205; the sequence is VDVTLVCAET…MYRGEISVPQ (66 aa). Disordered stretches follow at residues 290–342, 355–501, 632–655, 686–719, 758–791, 851–947, and 998–1046; these read LRRK…DAES, AERD…KLQD, PPFG…PGQA, EFGP…GMSS, RDMP…RSWT, EMLQ…APNA, and DCKS…TGHD. Residues 294–303 are compositionally biased toward basic and acidic residues; the sequence is REQESDRDLE. The span at 315–324 shows a compositional bias: basic residues; the sequence is PRRKQARPRR. Residues 365 to 380 are compositionally biased toward polar residues; it reads QDNSQGEAEKISSSPA. Over residues 383–412 the composition is skewed to basic and acidic residues; the sequence is LVERAKEQKSMKEEGSDQPRSLNENHHQLE. Positions 413 to 432 are enriched in acidic residues; the sequence is LDDEDDDDQDHEEEEEQDIE. Residues 433 to 443 are compositionally biased toward basic and acidic residues; the sequence is ELIHTTNELRR. Over residues 445 to 454 the composition is skewed to low complexity; it reads AAAAAANAAA. The segment covering 636–651 has biased composition (gly residues); that stretch reads GHNGGHPGNSGPGNGC. Residues 703-714 are compositionally biased toward pro residues; the sequence is DGPPHPPSPLPF. Basic residues predominate over residues 768–777; the sequence is LKKKMPRPKG. The region spanning 781–833 is the HTH psq-type domain; the sequence is APRGGPPRSWTNTELTEALQHVWNKKMTTSQASRIFGIPYNSLLMYVRGKYGK. The span at 866–881 shows a compositional bias: basic and acidic residues; the sequence is KNEKSKERKEKEKDKN. Low complexity-rich tracts occupy residues 882–897 and 912–925; these read SMSS…SQGG and LGPM…LGLP.

In terms of tissue distribution, initially expressed at blastoderm stage, transient accumulation at dorso-lateral positions of the embryo and differences along the longitudinal axis. At later stages of embryogenesis, expression is found exclusively in neural anlagen. Expressed in 4 posterior-most ventral unpaired median interneurons (VUM) neurons, VUM interneurons and one progeny of the median neuroblast (MNB).

The protein localises to the nucleus. Its function is as follows. Has a regulatory role during midline cell development. The chain is Protein jim lovell (lov) from Drosophila melanogaster (Fruit fly).